The sequence spans 467 residues: Bifunctional enzyme LpxC/FabZ (467 aa).

The interval 1-306 is UDP-3-O-acyl-N-acetylglucosamine deacetylase; that stretch reads MLIHQRTLQN…FVKQLKKYAD (306 aa). Zn(2+) is bound by residues H79, H264, and D268. H291 (proton donor) is an active-site residue. A 3-hydroxyacyl-[acyl-carrier-protein] dehydratase region spans residues 307–467; it reads RNKLARQYQH…LMATVMEKKN (161 aa). Residue H370 is part of the active site.

It in the N-terminal section; belongs to the LpxC family. In the C-terminal section; belongs to the thioester dehydratase family. It depends on Zn(2+) as a cofactor.

Its subcellular location is the cytoplasm. The catalysed reaction is a UDP-3-O-[(3R)-3-hydroxyacyl]-N-acetyl-alpha-D-glucosamine + H2O = a UDP-3-O-[(3R)-3-hydroxyacyl]-alpha-D-glucosamine + acetate. The enzyme catalyses a (3R)-hydroxyacyl-[ACP] = a (2E)-enoyl-[ACP] + H2O. It participates in glycolipid biosynthesis; lipid IV(A) biosynthesis; lipid IV(A) from (3R)-3-hydroxytetradecanoyl-[acyl-carrier-protein] and UDP-N-acetyl-alpha-D-glucosamine: step 2/6. Functionally, catalyzes the hydrolysis of UDP-3-O-myristoyl-N-acetylglucosamine to form UDP-3-O-myristoylglucosamine and acetate, the committed step in lipid A biosynthesis. Involved in unsaturated fatty acids biosynthesis. Catalyzes the dehydration of short chain beta-hydroxyacyl-ACPs and long chain saturated and unsaturated beta-hydroxyacyl-ACPs. This chain is Bifunctional enzyme LpxC/FabZ (lpxC/fabZ), found in Chlorobaculum tepidum (strain ATCC 49652 / DSM 12025 / NBRC 103806 / TLS) (Chlorobium tepidum).